The primary structure comprises 219 residues: Inner membrane protein YghB (219 aa).

Over 1–17 the chain is Cytoplasmic; sequence MAVIQDIIAALWQHDFA. A helical transmembrane segment spans residues 18 to 38; sequence ALANPHVVSVVYFVMFATLFL. Topologically, residues 39 to 67 are periplasmic; sequence ENGLLPASFLPGDSLLLLAGALIAQDVMH. A helical transmembrane segment spans residues 68–88; sequence FLPTIGILTAAASLGCWLSYI. Residues 89–160 lie on the Cytoplasmic side of the membrane; that stretch reads QGRWLGNTRT…RRFQFFNWLS (72 aa). Residues 161–181 form a helical membrane-spanning segment; it reads GLLWVTVVTSFGYALSMIPFV. The Periplasmic segment spans residues 182 to 191; sequence KRHEDQVMTF. A helical membrane pass occupies residues 192-212; that stretch reads LMILPVALLVAGLLGTLVVVI. The Cytoplasmic segment spans residues 213 to 219; sequence KKKYCNA.

This sequence belongs to the DedA family.

The protein resides in the cell inner membrane. This Salmonella typhimurium (strain LT2 / SGSC1412 / ATCC 700720) protein is Inner membrane protein YghB (yghB).